We begin with the raw amino-acid sequence, 571 residues long: Dihydroxy-acid dehydratase (571 aa).

Cys-56 is a [2Fe-2S] cluster binding site. Asp-88 lines the Mg(2+) pocket. [2Fe-2S] cluster is bound at residue Cys-129. Asp-130 and Lys-131 together coordinate Mg(2+). Position 131 is an N6-carboxylysine (Lys-131). Cys-201 serves as a coordination point for [2Fe-2S] cluster. Glu-452 is a binding site for Mg(2+). Residue Ser-478 is the Proton acceptor of the active site.

The protein belongs to the IlvD/Edd family. As to quaternary structure, homodimer. [2Fe-2S] cluster serves as cofactor. Requires Mg(2+) as cofactor.

The enzyme catalyses (2R)-2,3-dihydroxy-3-methylbutanoate = 3-methyl-2-oxobutanoate + H2O. The catalysed reaction is (2R,3R)-2,3-dihydroxy-3-methylpentanoate = (S)-3-methyl-2-oxopentanoate + H2O. It participates in amino-acid biosynthesis; L-isoleucine biosynthesis; L-isoleucine from 2-oxobutanoate: step 3/4. The protein operates within amino-acid biosynthesis; L-valine biosynthesis; L-valine from pyruvate: step 3/4. Functions in the biosynthesis of branched-chain amino acids. Catalyzes the dehydration of (2R,3R)-2,3-dihydroxy-3-methylpentanoate (2,3-dihydroxy-3-methylvalerate) into 2-oxo-3-methylpentanoate (2-oxo-3-methylvalerate) and of (2R)-2,3-dihydroxy-3-methylbutanoate (2,3-dihydroxyisovalerate) into 2-oxo-3-methylbutanoate (2-oxoisovalerate), the penultimate precursor to L-isoleucine and L-valine, respectively. This chain is Dihydroxy-acid dehydratase, found in Streptococcus mutans serotype c (strain ATCC 700610 / UA159).